We begin with the raw amino-acid sequence, 619 residues long: Chaperone protein HscA homolog (619 aa).

Belongs to the heat shock protein 70 family.

Its function is as follows. Chaperone involved in the maturation of iron-sulfur cluster-containing proteins. Has a low intrinsic ATPase activity which is markedly stimulated by HscB. In Acinetobacter baumannii (strain ATCC 17978 / DSM 105126 / CIP 53.77 / LMG 1025 / NCDC KC755 / 5377), this protein is Chaperone protein HscA homolog.